A 181-amino-acid polypeptide reads, in one-letter code: Dual-action ribosomal maturation protein DarP (181 aa).

Residues 1-23 (MTGIKKPMSQYQDDNELEDWGPS) are disordered.

This sequence belongs to the DarP family.

It localises to the cytoplasm. Member of a network of 50S ribosomal subunit biogenesis factors which assembles along the 30S-50S interface, preventing incorrect 23S rRNA structures from forming. Promotes peptidyl transferase center (PTC) maturation. This chain is Dual-action ribosomal maturation protein DarP, found in Aeromonas salmonicida (strain A449).